We begin with the raw amino-acid sequence, 295 residues long: Indole-3-glycerol phosphate synthase (295 aa).

It belongs to the TrpC family.

The catalysed reaction is 1-(2-carboxyphenylamino)-1-deoxy-D-ribulose 5-phosphate + H(+) = (1S,2R)-1-C-(indol-3-yl)glycerol 3-phosphate + CO2 + H2O. It participates in amino-acid biosynthesis; L-tryptophan biosynthesis; L-tryptophan from chorismate: step 4/5. The chain is Indole-3-glycerol phosphate synthase from Prochlorococcus marinus (strain MIT 9515).